A 412-amino-acid chain; its full sequence is Imidazolonepropionase (412 aa).

Positions 76 and 78 each coordinate Fe(3+). Residues His-76 and His-78 each coordinate Zn(2+). 4-imidazolone-5-propanoate is bound by residues Arg-85, Tyr-148, and His-181. Tyr-148 contacts N-formimidoyl-L-glutamate. A Fe(3+)-binding site is contributed by His-242. His-242 contributes to the Zn(2+) binding site. Glu-245 contacts 4-imidazolone-5-propanoate. Position 317 (Asp-317) interacts with Fe(3+). Zn(2+) is bound at residue Asp-317. Residues Asn-319 and Gly-321 each contribute to the N-formimidoyl-L-glutamate site. Ser-322 is a binding site for 4-imidazolone-5-propanoate.

It belongs to the metallo-dependent hydrolases superfamily. HutI family. Requires Zn(2+) as cofactor. Fe(3+) serves as cofactor.

It is found in the cytoplasm. The catalysed reaction is 4-imidazolone-5-propanoate + H2O = N-formimidoyl-L-glutamate. It participates in amino-acid degradation; L-histidine degradation into L-glutamate; N-formimidoyl-L-glutamate from L-histidine: step 3/3. In terms of biological role, catalyzes the hydrolytic cleavage of the carbon-nitrogen bond in imidazolone-5-propanoate to yield N-formimidoyl-L-glutamate. It is the third step in the universal histidine degradation pathway. This Staphylococcus aureus (strain MRSA252) protein is Imidazolonepropionase.